Here is a 413-residue protein sequence, read N- to C-terminus: Prophage integrase IntA (413 aa).

A Core-binding (CB) domain is found at 105–186 (NTFLLVAERW…RINEVMIYAQ (82 aa)). Residues 209 to 386 (KNMPSIRPDQ…DYLEQRRPMM (178 aa)) enclose the Tyr recombinase domain. Residues Arg248, Lys275, His337, Arg340, and His363 contribute to the active site. Tyr373 functions as the O-(3'-phospho-DNA)-tyrosine intermediate in the catalytic mechanism.

This sequence belongs to the 'phage' integrase family.

In terms of biological role, integrase is necessary for integration of the phage into the host genome by site-specific recombination. In conjunction with excisionase, integrase is also necessary for excision of the prophage from the host genome. Part of the cryptic P4-like prophage CP4-57, it excises the prophage when overexpressed, which also requires integration host factor (encoded by ihfA and ihfB). Overexpression of AlpA leads to excision of the CP4-57 prophage, which inactivates ssrA (the gene upstream of the prophage) that encodes tmRNA which is required to rescue stalled ribosomes in a process known as trans-translation. This is Prophage integrase IntA (intA) from Escherichia coli (strain K12).